The following is a 255-amino-acid chain: ATP synthase subunit a 2 (255 aa).

5 helical membrane passes run 24–44, 86–106, 131–151, 205–225, and 226–246; these read WFGI…VFIL, LIGP…AVDL, DINI…GYTF, MIFI…SVPW, and ALFH…LTVV.

This sequence belongs to the ATPase A chain family. In terms of assembly, F-type ATPases have 2 components, CF(1) - the catalytic core - and CF(0) - the membrane proton channel. CF(1) has five subunits: alpha(3), beta(3), gamma(1), delta(1), epsilon(1). CF(0) has three main subunits: a(1), b(2) and c(9-12). The alpha and beta chains form an alternating ring which encloses part of the gamma chain. CF(1) is attached to CF(0) by a central stalk formed by the gamma and epsilon chains, while a peripheral stalk is formed by the delta and b chains.

The protein localises to the cell inner membrane. In terms of biological role, key component of the proton channel; it plays a direct role in the translocation of protons across the membrane. In Vibrio campbellii (strain ATCC BAA-1116), this protein is ATP synthase subunit a 2.